Here is a 62-residue protein sequence, read N- to C-terminus: Overexpressed in colon carcinoma 1 protein homolog (62 aa).

Residues 1 to 16 are compositionally biased toward gly residues; it reads MGCGNSTAGGAGGRGA. Positions 1–62 are disordered; it reads MGCGNSTAGG…SGQTKAAPKD (62 aa).

Belongs to the OCC1 family.

This is Overexpressed in colon carcinoma 1 protein homolog from Gallus gallus (Chicken).